Here is a 250-residue protein sequence, read N- to C-terminus: Ribonucleotide monophosphatase NagD (250 aa).

Positions 9 and 11 each coordinate Mg(2+). The active site involves aspartate 11. Substrate-binding positions include aspartate 11, 42-43 (TN), and lysine 176. Mg(2+) is bound at residue aspartate 201. 202-205 (NLRT) provides a ligand contact to substrate.

The protein belongs to the HAD-like hydrolase superfamily. NagD family. Monomer. Requires Mg(2+) as cofactor. Mn(2+) is required as a cofactor. Co(2+) serves as cofactor. The cofactor is Zn(2+).

It carries out the reaction a ribonucleoside 5'-phosphate + H2O = a ribonucleoside + phosphate. In terms of biological role, catalyzes the dephosphorylation of an unusually broad range of substrate including deoxyribo- and ribonucleoside tri-, di-, and monophosphates, as well as polyphosphate and glucose-1-P (Glu1P). This is Ribonucleotide monophosphatase NagD (nagD) from Escherichia coli O157:H7.